A 526-amino-acid polypeptide reads, in one-letter code: MASGPHSTATAAAAASSAAPSAGGSSSGTTTTTTTTTGGILIGDRLYSEVSLTIDHSLIPEERLSPTPSMQDGLDLPSETDLRILGCELIQAAGILLRLPQVAMATGQVLFHRFFYSKSFVKHSFEIVAMACINLASKIEEAPRRIRDVINVFHHLRQLRGKRTPSPLILDQNYINTKNQVIKAERRVLKELGFCVHVKHPHKIIVMYLQVLECERNQTLVQTAWNYMNDSLRTNVFVRFQPETIACACIYLAARALQIPLPTRPHWFLLFGTTEEEIQEICIETLRLYTRKKPNYELLEKEVEKRKVALQEAKLKAKGLNPDGTPALSTLGGFSPASKPSSPREVKAEEKSPISINVKTVKKEPEDRQQASKSPYNGVRKDSKRSRNSRSASRSRSRTRSRSRSHTPRRHYNNRRSRSGTYSSRSRSRSRSHSESPRRHHNHGSPHLKAKHTRDDLKSSNRHGHKRKKSRSRSQSKSRDHSDAAKKHRHERGHHRDRRERSRSFERSHKSKHHGGSRSGHGRHRR.

The tract at residues 1 to 36 is disordered; sequence MASGPHSTATAAAAASSAAPSAGGSSSGTTTTTTTT. Cyclin-like stretches follow at residues 88-190 and 203-287; these read ELIQ…RVLK and KIIV…ETLR. Residues 318–526 form a disordered region; sequence KGLNPDGTPA…SRSGHGRHRR (209 aa). Thr325 is modified (phosphothreonine). Ser335 and Ser338 each carry phosphoserine. Glycyl lysine isopeptide (Lys-Gly) (interchain with G-Cter in SUMO2) cross-links involve residues Lys339 and Lys347. A compositionally biased stretch (basic and acidic residues) spans 342–352; sequence SPREVKAEEKS. 2 positions are modified to phosphoserine: Ser352 and Ser355. A compositionally biased stretch (basic and acidic residues) spans 361–370; that stretch reads VKKEPEDRQQ. Lys362 is covalently cross-linked (Glycyl lysine isopeptide (Lys-Gly) (interchain with G-Cter in SUMO2)). Ser374 is subject to Phosphoserine. Basic residues-rich tracts occupy residues 382-418, 438-452, 460-476, and 486-498; these read DSKR…RRSR, RRHH…KAKH, SNRH…RSQS, and KKHR…HRDR. An RS region spans residues 390–432; the sequence is RSASRSRSRTRSRSRSHTPRRHYNNRRSRSGTYSSRSRSRSRS. Phosphoserine is present on Ser445. Basic and acidic residues predominate over residues 499-508; it reads RERSRSFERS. The span at 509 to 526 shows a compositional bias: basic residues; sequence HKSKHHGGSRSGHGRHRR.

Belongs to the cyclin family. Cyclin L subfamily. In terms of assembly, (Microbial infection) Interacts with human herpes virus 1 (HHV-1) transcriptional regulator ICP22. As to quaternary structure, interacts with POLR2A via its hyperphosphorylated C-terminal domain (CTD). Interacts with CDK11A, CDK12 and CDK13. Isoforms 1 and 2, but not isoform 3, interact with CDK11B. May form a ternary complex with CDK11B and casein kinase II (CKII). Interacts with pre-mRNA-splicing factors, including at least SRSF1, SRSF2 and SRSF7/SLU7. As to expression, widely expressed. Overexpression in primary tumors of head and neck squamous cell carcinomas (HNSCC).

It localises to the nucleus speckle. The protein resides in the nucleus. Its subcellular location is the nucleoplasm. Functionally, involved in pre-mRNA splicing. Functions in association with cyclin-dependent kinases (CDKs). Inhibited by the CDK-specific inhibitor CDKN1A/p21. May play a role in the regulation of RNA polymerase II (pol II). May be a candidate proto-oncogene in head and neck squamous cell carcinomas (HNSCC). This Homo sapiens (Human) protein is Cyclin-L1 (CCNL1).